A 747-amino-acid chain; its full sequence is Kinesin-like protein KIF3B (747 aa).

M1 is modified (N-acetylmethionine). S2 is modified (N-acetylserine; in Kinesin-like protein KIF3B, N-terminally processed). A Kinesin motor domain is found at 9–340 (SVRVVVRCRP…LRYANRAKNI (332 aa)). 96-103 (GQTGTGKT) serves as a coordination point for ATP. Positions 346–579 (VNEDPKDALL…EQTQNELTRE (234 aa)) form a coiled coil. Disordered regions lie at residues 374–412 (IGRR…DKDD) and 699–747 (QVDA…LVPK). The span at 393–411 (GEEEEEEGEEGEEEGDDKD) shows a compositional bias: acidic residues. A globular region spans residues 580-747 (LKLKHLIIEN…YPQSRGLVPK (168 aa)). The segment covering 701–710 (DASSFESTAN) has biased composition (polar residues). Basic residues predominate over residues 711–721 (KKSKARPKSGR). Positions 722 to 735 (KSGSSSSSSGTPAS) are enriched in low complexity.

Belongs to the TRAFAC class myosin-kinesin ATPase superfamily. Kinesin family. Kinesin II subfamily. As to quaternary structure, heterodimer of KIF3A and KIF3B. KIF3A/KIF3B heterodimer interacts with KIFAP3 forming a heterotrimeric (KIF3A/KIF3B/KIFAP3) complex. Interacts directly with IFT20. Interacts with the SMC3 subunit of the cohesin complex. Interacts with FLCN.

It is found in the cytoplasm. It localises to the cytoskeleton. Its subcellular location is the cell projection. The protein localises to the cilium. The protein resides in the dendritic spine. Functionally, microtubule-based molecular motor that transport intracellular cargos, such as vesicles, organelles and protein complexes. Uses ATP hydrolysis to generate force to bind and move along the microtubule. Plays a role in cilia formation. Involved in photoreceptor integrity and opsin trafficking in rod photoreceptors. Transports vesicles containing N-methyl-D-aspartate (NMDA) receptor subunit GRIN2A into neuronal dendrites. This Homo sapiens (Human) protein is Kinesin-like protein KIF3B (KIF3B).